A 59-amino-acid polypeptide reads, in one-letter code: Large ribosomal subunit protein bL32B (59 aa).

Belongs to the bacterial ribosomal protein bL32 family.

The protein is Large ribosomal subunit protein bL32B (rpmF2) of Enterococcus faecalis (strain ATCC 700802 / V583).